A 716-amino-acid chain; its full sequence is Fatty acid oxidation complex subunit alpha (716 aa).

Residues 1–189 are enoyl-CoA hydratase/isomerase; sequence MIYQSPTIQV…KVGAVDAVVA (189 aa). A substrate-binding site is contributed by Asp-296. Residues 311 to 716 are 3-hydroxyacyl-CoA dehydrogenase; sequence KDVKSAAVLG…AANNGSYYQA (406 aa). NAD(+) is bound by residues Met-324, Asp-343, 400–402, Lys-407, and Ser-429; that span reads VVE. The active-site For 3-hydroxyacyl-CoA dehydrogenase activity is His-450. Position 453 (Asn-453) interacts with NAD(+). Residues Asn-500 and Tyr-660 each contribute to the substrate site.

It in the N-terminal section; belongs to the enoyl-CoA hydratase/isomerase family. The protein in the C-terminal section; belongs to the 3-hydroxyacyl-CoA dehydrogenase family. As to quaternary structure, heterotetramer of two alpha chains (FadB) and two beta chains (FadA).

It carries out the reaction a (3S)-3-hydroxyacyl-CoA + NAD(+) = a 3-oxoacyl-CoA + NADH + H(+). It catalyses the reaction a (3S)-3-hydroxyacyl-CoA = a (2E)-enoyl-CoA + H2O. The catalysed reaction is a 4-saturated-(3S)-3-hydroxyacyl-CoA = a (3E)-enoyl-CoA + H2O. The enzyme catalyses (3S)-3-hydroxybutanoyl-CoA = (3R)-3-hydroxybutanoyl-CoA. It carries out the reaction a (3Z)-enoyl-CoA = a 4-saturated (2E)-enoyl-CoA. It catalyses the reaction a (3E)-enoyl-CoA = a 4-saturated (2E)-enoyl-CoA. Its pathway is lipid metabolism; fatty acid beta-oxidation. Its function is as follows. Involved in the aerobic and anaerobic degradation of long-chain fatty acids via beta-oxidation cycle. Catalyzes the formation of 3-oxoacyl-CoA from enoyl-CoA via L-3-hydroxyacyl-CoA. It can also use D-3-hydroxyacyl-CoA and cis-3-enoyl-CoA as substrate. The protein is Fatty acid oxidation complex subunit alpha of Shewanella sp. (strain ANA-3).